A 1328-amino-acid chain; its full sequence is Fanconi anemia group I protein (1328 aa).

Ser-407 carries the phosphoserine modification. A Glycyl lysine isopeptide (Lys-Gly) (interchain with G-Cter in ubiquitin) cross-link involves residue Lys-523. Phosphoserine occurs at positions 556 and 730. Thr-952 carries the phosphothreonine modification. Phosphoserine is present on Ser-1121. Positions 1300-1328 (EDGEDENEEGTASEHGGQNKEPAKKKRKK) are disordered. Acidic residues predominate over residues 1301 to 1310 (DGEDENEEGT).

Belongs to the Fanconi anemia group I protein family. Homodimer. Part of a FANCI-FANCD2 heterodimeric complex that binds and scans dsDNA for DNA damage. Interacts with FANCL. Interacts with MTMR15/FAN1. Interacts with POLN. Interacts with UBL5; the interaction promotes FANCI homodimerization. In terms of processing, monoubiquitinated by FANCL on Lys-523 during S phase and upon genotoxic stress. Deubiquitinated by USP1 as cells enter G2/M, or once DNA repair is completed. Monoubiquitination requires the FANCA-FANCB-FANCC-FANCE-FANCF-FANCG-FANCM complex. Ubiquitination is required for binding to chromatin, DNA repair, and normal cell cycle progression. Monoubiquitination is stimulated by DNA-binding. Phosphorylated in response to DNA damage by ATM and/or ATR. Phosphorylation of FANCI promotes ubiquitination of FANCD2, which prevents DNA release from the FANCI-FANCD2 complex.

It localises to the nucleus. The protein localises to the cytoplasm. Plays an essential role in the repair of DNA double-strand breaks by homologous recombination and in the repair of interstrand DNA cross-links (ICLs) by promoting FANCD2 monoubiquitination by FANCL and participating in recruitment to DNA repair sites. The FANCI-FANCD2 complex binds and scans double-stranded DNA (dsDNA) for DNA damage; this complex stalls at DNA junctions between double-stranded DNA and single-stranded DNA. Participates in S phase and G2 phase checkpoint activation upon DNA damage. The polypeptide is Fanconi anemia group I protein (FANCI) (Homo sapiens (Human)).